The sequence spans 641 residues: Acetyl-coenzyme A synthetase (641 aa).

Residues 186–189 and T304 each bind CoA; that span reads RGGK. ATP contacts are provided by residues 380–382, 404–409, D493, and R508; these read GEP and DTWWQT. S516 provides a ligand contact to CoA. R519 provides a ligand contact to ATP. Mg(2+)-binding residues include V530, H532, and I535. K602 is subject to N6-acetyllysine.

It belongs to the ATP-dependent AMP-binding enzyme family. Mg(2+) is required as a cofactor. In terms of processing, acetylated. Deacetylation by the SIR2-homolog deacetylase activates the enzyme.

It carries out the reaction acetate + ATP + CoA = acetyl-CoA + AMP + diphosphate. Its function is as follows. Catalyzes the conversion of acetate into acetyl-CoA (AcCoA), an essential intermediate at the junction of anabolic and catabolic pathways. AcsA undergoes a two-step reaction. In the first half reaction, AcsA combines acetate with ATP to form acetyl-adenylate (AcAMP) intermediate. In the second half reaction, it can then transfer the acetyl group from AcAMP to the sulfhydryl group of CoA, forming the product AcCoA. The protein is Acetyl-coenzyme A synthetase of Gamma-proteobacterium EBAC31A08.